We begin with the raw amino-acid sequence, 310 residues long: ADP-L-glycero-D-manno-heptose-6-epimerase (310 aa).

NADP(+) is bound by residues 10-11 (FI), 31-32 (DN), Lys38, Lys53, 75-79 (EGACS), and Asn92. Tyr140 (proton acceptor) is an active-site residue. Lys144 lines the NADP(+) pocket. Asn169 lines the substrate pocket. 2 residues coordinate NADP(+): Val170 and Lys178. Lys178 acts as the Proton acceptor in catalysis. Substrate is bound by residues Gly180, His187, 201–204 (FAGS), Arg209, and Tyr272.

This sequence belongs to the NAD(P)-dependent epimerase/dehydratase family. HldD subfamily. Homopentamer. Requires NADP(+) as cofactor.

The enzyme catalyses ADP-D-glycero-beta-D-manno-heptose = ADP-L-glycero-beta-D-manno-heptose. The protein operates within nucleotide-sugar biosynthesis; ADP-L-glycero-beta-D-manno-heptose biosynthesis; ADP-L-glycero-beta-D-manno-heptose from D-glycero-beta-D-manno-heptose 7-phosphate: step 4/4. Functionally, catalyzes the interconversion between ADP-D-glycero-beta-D-manno-heptose and ADP-L-glycero-beta-D-manno-heptose via an epimerization at carbon 6 of the heptose. In Sodalis glossinidius (strain morsitans), this protein is ADP-L-glycero-D-manno-heptose-6-epimerase.